The chain runs to 377 residues: MNLKHPTRKDHILIKVVNNLLIDLPTPSNLSIMWNWGSLLGIFLIIPIITGLFLAMHYTPHMNLAFESIYHIMYDVNMGWLIRFIHVNGASFFFIFLYLHMARGMYYYSFHYKEVWLIGCTIYVVSMATAFMGYILPWGQMSLWGATVITNMLTTIPYLGQYLVQWIWGGFAVGNPTLNRFFVLHFILPFIILALSIIHLIFLHSKGSTNPLGMNSNAYKIPFHPYYSSKDLMFLLLLMMIMMVIIFWNPFLFMDAENSLEANFMKTPVHIKPEWYFLWVYTLLRSIPNKLGGVLTMVFSILILFLLPFISNFNYITSMSMINKLLFWSFVVNMLILTWIGGMPVVPLFETMGLTSTFLYFIIILIYSNSFLMINKS.

A run of 4 helical transmembrane segments spans residues Trp-36–Met-56, Trp-80–Ala-102, Val-115–Ile-135, and Phe-181–Ile-201. The heme b site is built by His-86 and His-100. Heme b is bound by residues His-185 and His-199. His-204 provides a ligand contact to a ubiquinone. 4 helical membrane-spanning segments follow: residues Tyr-227–Phe-247, Leu-291–Ser-311, Leu-326–Val-346, and Leu-354–Ile-374.

It belongs to the cytochrome b family. In terms of assembly, the main subunits of complex b-c1 are: cytochrome b, cytochrome c1 and the Rieske protein. Requires heme b as cofactor.

The protein resides in the mitochondrion inner membrane. In terms of biological role, component of the ubiquinol-cytochrome c reductase complex (complex III or cytochrome b-c1 complex) that is part of the mitochondrial respiratory chain. The b-c1 complex mediates electron transfer from ubiquinol to cytochrome c. Contributes to the generation of a proton gradient across the mitochondrial membrane that is then used for ATP synthesis. In Myzostoma seymourcollegiorum (Polychaete worm), this protein is Cytochrome b (mt:Cyt-b).